The primary structure comprises 710 residues: MRYIVSPQLVLQVGKGQEVERALYLTPYDYIDEKSPIYYFLRSHLNIQQPEIVKRHILLTLRMTQLKGYLGNLLDIKDDIIIYSHKNNLEYSYVDNTIFNPFVYTQKKTLLKNDSFLYNVYPGACDFLVIWVARACDTSIPEFGSYEDVDNNIIKFETMLMEVFPQLDLDITVESKFNNIFRTNLKLTGLKKIIQRVQDLDINYKSLLSRYDEHFINMTGNHFILNDEQLNLSIWDLDGTLALSSDGDTVMINNVKLFTDLVSDIDTQMERIKGDITYKVHLATPINSRIKLDIETSFIFIETATNNILLSSDKKISIILAKNHISIKVKNHIPNIEKYFTFLVIAINAMFNSVQKSADFTKVETVYWSRICQNTKNKNRKPIIINYLDPGMKKISNNFYKSDEKEVFINDNGIMFTCMDPLGKYNKVGFLNIFHDMRKYCIPCCFLHDQSHRSTFSSCVHQIDVEKKIVSPYILNFGKVVTESKMSFLPIIFDAFLNDGMTANMEQDNKRLKETSGYHIVRCCAGDDIVRLRTTSDIIQFVNEDKNILIVNDMVYFPMNASDIGKKIHILIQEIVHEVMIVKKKESSDKIDFFPPNYKLLKDLFPKQTIQTPIQSDAGMVLTTDGFYIDGKLFNEDLSSKYVTFTKNVIASDAVAKYFSPLFKYVISEAKDRFIKTWMINIMIHMNVDPNNIIPTLEKYYPNSGRAQIN.

It belongs to the poxviridae VETF large subunit family. As to quaternary structure, heterodimer of a 70 kDa and a 82 kDa subunit. Part of the early transcription complex composed of ETF, RAP94/OPG109, and the DNA-directed RNA polymerase.

Its subcellular location is the virion. In terms of biological role, acts with RNA polymerase to initiate transcription from early gene promoters. Is recruited by the RPO-associated protein of 94 kDa RAP94/OPG109 to form the early transcription complex, which also contains the core RNA polymerase. ETF heterodimer binds to early gene promoters. In Bos taurus (Bovine), this protein is Early transcription factor 82 kDa subunit (OPG133).